We begin with the raw amino-acid sequence, 307 residues long: Retron Ec86 putative ribosyltransferase/DNA-binding protein (307 aa).

Possible ribosyltransferase/DNA-binding component of antiviral defense system retron Ec86, composed of a non-coding RNA (ncRNA), a ribosyltransferase/DNA-binding protein and a reverse transcriptase (RT). Expression of the 3-gene retron confers protection against bacteriophages T5. At multiplicity of infection (MOI) of 0.02 cultures grow normally when infected with T5 without collapsing, at MOI 2 cultures enter growth stasis. This is Retron Ec86 putative ribosyltransferase/DNA-binding protein from Escherichia coli.